Reading from the N-terminus, the 209-residue chain is PRA1 family protein A1 (209 aa).

The next 4 membrane-spanning stretches (helical) occupy residues 51 to 73 (LYYY…VLTR), 77 to 99 (IFAA…GSFS), 144 to 164 (VFVL…SGLL), and 166 to 186 (VSVA…LRTP).

This sequence belongs to the PRA1 family.

It localises to the endoplasmic reticulum membrane. Functionally, may be involved in both secretory and endocytic intracellular trafficking in the endosomal/prevacuolar compartments. This is PRA1 family protein A1 (PRA1A1) from Arabidopsis thaliana (Mouse-ear cress).